Reading from the N-terminus, the 1200-residue chain is Metabotropic glycine receptor (1200 aa).

The first 24 residues, 1–24 (MGAMAYSLLFCLLLAHLGLGEVGA), serve as a signal peptide directing secretion. A disordered region spans residues 25–62 (SLDPPGRPDSPRERTPRGKQHGQQLPRASAPDPSIPWS). Residues 25 to 417 (SLDPPGRPDS…CFVQEDKYLR (393 aa)) lie on the Extracellular side of the membrane. Positions 85 to 281 (YLYTGDFHQL…CENGSYKPGW (197 aa)) are cache-like region. N-linked (GlcNAc...) asparagine glycosylation is found at N98 and N143. A disulfide bridge links C99 with C272. S172 and R173 together coordinate glycine. Residue N215 is glycosylated (N-linked (GlcNAc...) asparagine). The disordered stretch occupies residues 234 to 253 (LHRRGSNQGPRGLGHSWRRR). E271 serves as a coordination point for glycine. A glycan (N-linked (GlcNAc...) asparagine) is linked at N274. D307 provides a ligand contact to glycine. N-linked (GlcNAc...) asparagine glycosylation occurs at N333. Residues 418 to 439 (LAIISFQALCMLLDFVSMLVVY) traverse the membrane as a helical segment. The Cytoplasmic segment spans residues 440–451 (HFRKAKSIRASG). Residues 452 to 474 (LILLETILFGSLLLYFPVVILYF) form a helical membrane-spanning segment. Over 475–478 (EPST) the chain is Extracellular. Residues 479–501 (FRCILLRWARLLGFATVYGTVTL) form a helical membrane-spanning segment. C481 and C573 are oxidised to a cystine. Residues 502–525 (KLHRVLKVFLSRTAQRIPYMTGGR) are Cytoplasmic-facing. A helical membrane pass occupies residues 526–547 (VMRMLAVIVLVVFWFLVGWTSS). Over 548 to 576 (MCQNLERDILLVGQGQTSDHLTFNMCLID) the chain is Extracellular. Residues 577-597 (RWDYMTAVAEFLFLLWGIYLC) form a helical membrane-spanning segment. The Cytoplasmic portion of the chain corresponds to 598 to 611 (YAVRTVPSAFHEPR). Residues 612-633 (YMAVAVHNELIITAIFHTIRFV) traverse the membrane as a helical segment. At 634-642 (LASRLQPDW) the chain is on the extracellular side. The helical transmembrane segment at 643-664 (MLMLYFAHAHLTVTVTIGLLLI) threads the bilayer. Topologically, residues 665 to 1200 (PKFSHSSNNP…SANKIPGPQK (536 aa)) are cytoplasmic. Phosphoserine occurs at positions 694, 705, and 708. The disordered stretch occupies residues 757–875 (RITEIPETVS…EAESTESVPL (119 aa)). Composition is skewed to basic and acidic residues over residues 769–781 (CSKE…DHSA) and 819–828 (STYDHVRDQT). K774 is covalently cross-linked (Glycyl lysine isopeptide (Lys-Gly) (interchain with G-Cter in ubiquitin)). Residues 845–856 (ENSTLESLSSKK) are compositionally biased toward low complexity. Residues S865 and S944 each carry the phosphoserine modification. Positions 947–988 (DNVETIPNSGHMEEPRKPQKSGIMKQQRVSLPTANPDVSSGI) are disordered. A compositionally biased stretch (polar residues) spans 973–988 (QRVSLPTANPDVSSGI). The short motif at 1000–1004 (VCPWE) is the VCPWE motif 1 element. A Phosphoserine modification is found at S1059. Positions 1065 to 1069 (VCPWE) match the VCPWE motif 2 motif. At S1074 the chain carries Phosphoserine. Positions 1130–1160 (QMGDQEKQTSSSVDIIPGSCNSSNNSHQPLT) are disordered. The VCPWE motif 3 motif lies at 1165-1169 (VCPWE). The tract at residues 1177–1200 (NAERSVTLPASSALSANKIPGPQK) is disordered. Over residues 1178–1191 (AERSVTLPASSALS) the composition is skewed to polar residues.

It belongs to the G-protein coupled receptor 3 family. As to quaternary structure, homodimer. Associates with the RGS7-GNB5 complex, promoting its localization to the cell membrane and regulating its GTPase activator activity. Interacts (via VCPWE motifs) with GNAO1. Interacts with GPC4. Interacts with EGFLAM. In terms of tissue distribution, highly expressed in brain. Expressed in several brain regions including the cerebral cortex, hippocampus, cerebellum and caudate putamen. Only expressed in neurons, and not in microglia, oligodendrocytes or astrocytes. Expressed in the visual center of the cerebral cortex. Also expressed in the eye, including photoreceptors, ganglion cells and trabecular meshwork.

Its subcellular location is the cell membrane. The protein resides in the postsynaptic cell membrane. The protein localises to the presynaptic cell membrane. It localises to the nucleus. Functionally, metabotropic receptor for glycine that controls synapse formation and function in the brain. Acts as an atypical G-protein coupled receptor that recruits and regulates the RGS7-GNB5 complex instead of activating G proteins. In absence of glycine ligand, promotes the GTPase activator activity of RGS7, increasing the GTPase activity of G protein alpha subunits, thereby driving them into their inactive GDP-bound form. Glycine-binding changes the conformation of the intracellular surface, inhibiting the GTPase activator activity of the RGS7-GNB5 complex, promoting G protein alpha subunits into their active GTP-bound form and regulating cAMP levels. Also able to bind taurine, a compound closely related to glycine, but with a two-fold lower affinity. Glycine receptor-dependent regulation of cAMP controls key ion channels, kinases and neurotrophic factors involved in neuronal excitability and synaptic transmission. Plays a pivotal role in regulating mood and cognition via its ability to regulate neuronal excitability in L2/L3 pyramidal neurons of the prefrontal cortex. Also involved in spatial learning by regulating hippocampal CA1 neuronal excitability. Acts as a synaptic organizer in the hippocampus, required for proper mossy fiber-CA3 neurocircuitry establishment, structure and function: induces presynaptic differentiation in contacting axons via its interaction with GPC4. In addition to glycine, may also act as a receptor for osteocalcin (Bglap or Bglap2) hormone: osteocalcin-binding initiates a signaling response that prevents neuronal apoptosis in the hippocampus and regulates the synthesis of neurotransmitters. This Mus musculus (Mouse) protein is Metabotropic glycine receptor.